We begin with the raw amino-acid sequence, 582 residues long: Proline--tRNA ligase (582 aa).

It belongs to the class-II aminoacyl-tRNA synthetase family. ProS type 1 subfamily. Homodimer.

The protein localises to the cytoplasm. It catalyses the reaction tRNA(Pro) + L-proline + ATP = L-prolyl-tRNA(Pro) + AMP + diphosphate. Its function is as follows. Catalyzes the attachment of proline to tRNA(Pro) in a two-step reaction: proline is first activated by ATP to form Pro-AMP and then transferred to the acceptor end of tRNA(Pro). As ProRS can inadvertently accommodate and process non-cognate amino acids such as alanine and cysteine, to avoid such errors it has two additional distinct editing activities against alanine. One activity is designated as 'pretransfer' editing and involves the tRNA(Pro)-independent hydrolysis of activated Ala-AMP. The other activity is designated 'posttransfer' editing and involves deacylation of mischarged Ala-tRNA(Pro). The misacylated Cys-tRNA(Pro) is not edited by ProRS. The chain is Proline--tRNA ligase from Mycolicibacterium paratuberculosis (strain ATCC BAA-968 / K-10) (Mycobacterium paratuberculosis).